The following is a 250-amino-acid chain: 5'-nucleotidase SurE (250 aa).

4 residues coordinate a divalent metal cation: aspartate 8, aspartate 9, serine 39, and asparagine 95.

This sequence belongs to the SurE nucleotidase family. A divalent metal cation serves as cofactor.

The protein localises to the cytoplasm. It catalyses the reaction a ribonucleoside 5'-phosphate + H2O = a ribonucleoside + phosphate. Its function is as follows. Nucleotidase that shows phosphatase activity on nucleoside 5'-monophosphates. The chain is 5'-nucleotidase SurE from Syntrophobacter fumaroxidans (strain DSM 10017 / MPOB).